We begin with the raw amino-acid sequence, 499 residues long: Ethanolamine-phosphate phospho-lyase (499 aa).

Residue lysine 278 is modified to N6-(pyridoxal phosphate)lysine. Positions 468–479 are enriched in basic and acidic residues; that stretch reads RDSTTDSKENPS. A disordered region spans residues 468-499; the sequence is RDSTTDSKENPSRKRNGMCTDTHSLLSKRLKT.

This sequence belongs to the class-III pyridoxal-phosphate-dependent aminotransferase family. In terms of assembly, homotetramer. Pyridoxal 5'-phosphate serves as cofactor.

It localises to the mitochondrion. It catalyses the reaction phosphoethanolamine + H2O = acetaldehyde + NH4(+) + phosphate. Catalyzes the pyridoxal-phosphate-dependent breakdown of phosphoethanolamine, converting it to ammonia, inorganic phosphate and acetaldehyde. The polypeptide is Ethanolamine-phosphate phospho-lyase (ETNPPL) (Homo sapiens (Human)).